The chain runs to 310 residues: Protein-L-isoaspartate O-methyltransferase (310 aa).

2 disordered regions span residues 1–44 and 67–88; these read MSGE…DKPA and AKPA…PAAP. The segment covering 14–29 has biased composition (basic and acidic residues); sequence EDLKRAPRKSEGRPGE. The segment covering 32–44 has biased composition (low complexity); sequence AAGAVPKAADKPA. A compositionally biased stretch (pro residues) spans 75-86; sequence PTAPKPALPKPA. Ser-157 is an active-site residue.

It belongs to the methyltransferase superfamily. L-isoaspartyl/D-aspartyl protein methyltransferase family.

Its subcellular location is the cytoplasm. It carries out the reaction [protein]-L-isoaspartate + S-adenosyl-L-methionine = [protein]-L-isoaspartate alpha-methyl ester + S-adenosyl-L-homocysteine. Catalyzes the methyl esterification of L-isoaspartyl residues in peptides and proteins that result from spontaneous decomposition of normal L-aspartyl and L-asparaginyl residues. It plays a role in the repair and/or degradation of damaged proteins. This chain is Protein-L-isoaspartate O-methyltransferase, found in Burkholderia orbicola (strain MC0-3).